The sequence spans 593 residues: Aspartate--tRNA(Asp/Asn) ligase (593 aa).

L-aspartate is bound at residue Glu173. The aspartate stretch occupies residues Gln197–Lys200. L-aspartate is bound at residue Arg219. ATP is bound by residues Arg219–Glu221 and Gln228. Residue His451 participates in L-aspartate binding. An ATP-binding site is contributed by Glu485. Arg492 serves as a coordination point for L-aspartate. Gly537 to Arg540 provides a ligand contact to ATP.

The protein belongs to the class-II aminoacyl-tRNA synthetase family. Type 1 subfamily. Homodimer.

The protein resides in the cytoplasm. The catalysed reaction is tRNA(Asx) + L-aspartate + ATP = L-aspartyl-tRNA(Asx) + AMP + diphosphate. Aspartyl-tRNA synthetase with relaxed tRNA specificity since it is able to aspartylate not only its cognate tRNA(Asp) but also tRNA(Asn). Reaction proceeds in two steps: L-aspartate is first activated by ATP to form Asp-AMP and then transferred to the acceptor end of tRNA(Asp/Asn). This chain is Aspartate--tRNA(Asp/Asn) ligase, found in Legionella pneumophila (strain Corby).